A 315-amino-acid chain; its full sequence is Methionyl-tRNA formyltransferase (315 aa).

107–110 (SLLP) is a binding site for (6S)-5,6,7,8-tetrahydrofolate.

The protein belongs to the Fmt family.

It carries out the reaction L-methionyl-tRNA(fMet) + (6R)-10-formyltetrahydrofolate = N-formyl-L-methionyl-tRNA(fMet) + (6S)-5,6,7,8-tetrahydrofolate + H(+). Its function is as follows. Attaches a formyl group to the free amino group of methionyl-tRNA(fMet). The formyl group appears to play a dual role in the initiator identity of N-formylmethionyl-tRNA by promoting its recognition by IF2 and preventing the misappropriation of this tRNA by the elongation apparatus. The protein is Methionyl-tRNA formyltransferase of Borreliella afzelii (strain PKo) (Borrelia afzelii).